Here is a 477-residue protein sequence, read N- to C-terminus: Adenosylhomocysteinase (477 aa).

Residues Thr63, Asp142, and Glu202 each contribute to the substrate site. Position 203-205 (203-205 (TTT)) interacts with NAD(+). Positions 232 and 236 each coordinate substrate. NAD(+)-binding positions include Asn237, 266–271 (GYGDVG), Glu289, Asn324, 345–347 (IGH), and Asn390.

It belongs to the adenosylhomocysteinase family. NAD(+) is required as a cofactor.

It is found in the cytoplasm. The enzyme catalyses S-adenosyl-L-homocysteine + H2O = L-homocysteine + adenosine. The protein operates within amino-acid biosynthesis; L-homocysteine biosynthesis; L-homocysteine from S-adenosyl-L-homocysteine: step 1/1. Its function is as follows. May play a key role in the regulation of the intracellular concentration of adenosylhomocysteine. The protein is Adenosylhomocysteinase of Leptothrix cholodnii (strain ATCC 51168 / LMG 8142 / SP-6) (Leptothrix discophora (strain SP-6)).